The primary structure comprises 340 residues: Anthranilate phosphoribosyltransferase (340 aa).

5-phospho-alpha-D-ribose 1-diphosphate-binding positions include Gly81, 84-85 (GD), Thr89, 91-94 (NIST), 109-117 (KHGNRNLSS), and Ala121. Position 81 (Gly81) interacts with anthranilate. Ser93 lines the Mg(2+) pocket. Asn112 contacts anthranilate. An anthranilate-binding site is contributed by Arg167. Residues Asp226 and Glu227 each coordinate Mg(2+).

It belongs to the anthranilate phosphoribosyltransferase family. In terms of assembly, homodimer. It depends on Mg(2+) as a cofactor.

The catalysed reaction is N-(5-phospho-beta-D-ribosyl)anthranilate + diphosphate = 5-phospho-alpha-D-ribose 1-diphosphate + anthranilate. Its pathway is amino-acid biosynthesis; L-tryptophan biosynthesis; L-tryptophan from chorismate: step 2/5. In terms of biological role, catalyzes the transfer of the phosphoribosyl group of 5-phosphorylribose-1-pyrophosphate (PRPP) to anthranilate to yield N-(5'-phosphoribosyl)-anthranilate (PRA). This chain is Anthranilate phosphoribosyltransferase, found in Ruegeria sp. (strain TM1040) (Silicibacter sp.).